We begin with the raw amino-acid sequence, 353 residues long: Uroporphyrinogen decarboxylase (353 aa).

Residues 26–30 (RQAGR), Asp75, Tyr161, Ser216, and His332 contribute to the substrate site.

Belongs to the uroporphyrinogen decarboxylase family. Homodimer.

It is found in the cytoplasm. The catalysed reaction is uroporphyrinogen III + 4 H(+) = coproporphyrinogen III + 4 CO2. It participates in porphyrin-containing compound metabolism; protoporphyrin-IX biosynthesis; coproporphyrinogen-III from 5-aminolevulinate: step 4/4. Its function is as follows. Catalyzes the decarboxylation of four acetate groups of uroporphyrinogen-III to yield coproporphyrinogen-III. This Gluconacetobacter diazotrophicus (strain ATCC 49037 / DSM 5601 / CCUG 37298 / CIP 103539 / LMG 7603 / PAl5) protein is Uroporphyrinogen decarboxylase.